A 275-amino-acid polypeptide reads, in one-letter code: Putative rhamnulose-1-phosphate aldolase (275 aa).

Glu-117 is an active-site residue. Zn(2+) contacts are provided by His-141, His-143, and His-212.

This sequence belongs to the aldolase class II family. RhaD subfamily. As to quaternary structure, homotetramer. Zn(2+) is required as a cofactor.

Its subcellular location is the cytoplasm. It catalyses the reaction L-rhamnulose 1-phosphate = (S)-lactaldehyde + dihydroxyacetone phosphate. Its pathway is carbohydrate degradation; L-rhamnose degradation; glycerone phosphate from L-rhamnose: step 3/3. In terms of biological role, catalyzes the reversible cleavage of L-rhamnulose-1-phosphate to dihydroxyacetone phosphate (DHAP) and L-lactaldehyde. The polypeptide is Putative rhamnulose-1-phosphate aldolase (Salmonella typhi).